Reading from the N-terminus, the 348-residue chain is MKVGVVGASGYVGGETLRLLVNHPDVEIAAVTSRQHVGEYLHRVQPSLRGFTDLTFSELDYDRLSDSCDLVFTAVPHGTATDIVRALYDRDIKVIDLSADYRLHDPADYTKWYGWEHPHPDYLSKSVFGIPELHREEIRSAKLVSCPGCMAVTSILALAPPVREGLVDTEHIVVDSKIGSSGAGAGAGTAHAMRAGVIRPYKPAKHRHTGEIEQELSGIAGKKIRVSMSPHAVDVVRGILCTNHVFLTREASEKDLWKMYRQAYGEERFVRLIRDKKGLYKFPDPKFLVGSNFCDIGFDLDEDNNRLVAISASDNLMKGAAGSAIQNMNIMAGLDEMSGLRYTPLTPV.

Residue 9 to 12 (SGYV) participates in NADP(+) binding. Cysteine 149 is a catalytic residue. Asparagine 315 contributes to the NADP(+) binding site.

This sequence belongs to the NAGSA dehydrogenase family. Type 1 subfamily. LysY sub-subfamily.

The protein resides in the cytoplasm. It carries out the reaction [amino-group carrier protein]-C-terminal-N-(1-carboxy-5-oxopentan-1-yl)-L-glutamine + phosphate + NADP(+) = [amino-group carrier protein]-C-terminal-N-(1-carboxy-5-phosphooxy-5-oxopentan-1-yl)-L-glutamine + NADPH + H(+). The enzyme catalyses [amino-group carrier protein]-C-terminal-gamma-(L-glutamyl-5-semialdehyde)-L-glutamate + phosphate + NADP(+) = [amino-group carrier protein]-C-terminal-gamma-(5-phospho-L-glutamyl)-L-glutamate + NADPH + H(+). It participates in amino-acid biosynthesis; L-lysine biosynthesis via AAA pathway; L-lysine from L-alpha-aminoadipate (Thermus route): step 3/5. The protein operates within amino-acid biosynthesis; L-arginine biosynthesis. Its function is as follows. Involved in both the arginine and lysine biosynthetic pathways. This chain is Putative [LysW]-L-2-aminoadipate/[LysW]-L-glutamate phosphate reductase, found in Cenarchaeum symbiosum (strain A).